Consider the following 78-residue polypeptide: Short neurotoxin SNTX14 (78 aa).

The signal sequence occupies residues 1–21 (MKTLLLTFLVVTIVCLDLGYT). 4 disulfides stabilise this stretch: Cys24-Cys40, Cys33-Cys58, Cys62-Cys70, and Cys71-Cys76.

Belongs to the three-finger toxin family. Short-chain subfamily. In terms of tissue distribution, expressed by the venom gland.

The protein localises to the secreted. This three-finger toxin binds and inhibits the nicotinic acetylcholine receptor (nAChR). The protein is Short neurotoxin SNTX14 of Ophiophagus hannah (King cobra).